The following is a 302-amino-acid chain: MSEDVVTQPPANLVAGVVKAIRPRQWVKNVLVLAAPLAALGGGVRYDYVEVLSKVSMAFVVFSLAASAVYLVNDVRDVEADREHPTKRFRPIAAGVVPEWLAYTVAVVLGVTSLAGAWMLTPNLALVMVVYLAMQLAYCFGLKHQAVVEICVVSSAYLIRAIAGGVATKIPLSKWFLLIMAFGSLFMVAGKRYAELHLAERTGAAIRKSLESYTSTYLRFVWTLSATAVVLCYGLWAFERDGYSGSWFAVSMIPFTIAILRYAVDVDGGLAGEPEDIALRDRVLQLLALAWIATVGAAVAFG.

Position 28 (Lys-28) interacts with 5-phospho-alpha-D-ribose 1-diphosphate. A run of 2 helical transmembrane segments spans residues 30–50 and 55–75; these read VLVLAAPLAALGGGVRYDYVE and VSMAFVVFSLAASAVYLVNDV. A 5-phospho-alpha-D-ribose 1-diphosphate-binding site is contributed by Tyr-70. Mg(2+) is bound by residues Asn-73 and Asp-77. Residue Lys-87 coordinates 5-phospho-alpha-D-ribose 1-diphosphate. 2 consecutive transmembrane segments (helical) span residues 100–120 and 122–142; these read WLAYTVAVVLGVTSLAGAWML and PNLALVMVVYLAMQLAYCFGL. 5-phospho-alpha-D-ribose 1-diphosphate-binding residues include Lys-143 and Arg-160. The next 2 membrane-spanning stretches (helical) occupy residues 146-166 and 170-190; these read AVVEICVVSSAYLIRAIAGGV and IPLSKWFLLIMAFGSLFMVAG. Lys-191 contributes to the trans,octa-cis-decaprenyl phosphate binding site. Transmembrane regions (helical) follow at residues 218 to 238, 244 to 264, and 282 to 302; these read LRFVWTLSATAVVLCYGLWAF, SGSWFAVSMIPFTIAILRYAV, and RVLQLLALAWIATVGAAVAFG.

It belongs to the UbiA prenyltransferase family. DPPR synthase subfamily. As to quaternary structure, homotrimer. The cofactor is Mg(2+).

It localises to the cell inner membrane. The catalysed reaction is trans,octa-cis-decaprenyl phosphate + 5-phospho-alpha-D-ribose 1-diphosphate + H(+) = trans,octa-cis-decaprenylphospho-beta-D-ribofuranose 5-phosphate + diphosphate. The protein operates within cell wall biogenesis; cell wall polysaccharide biosynthesis. In terms of biological role, involved in the biosynthesis of decaprenylphosphoryl arabinose (DPA) a precursor for arabinan synthesis in mycobacterial cell wall biosynthesis. Catalyzes the transfer of a 5-phosphoribosyl residue from phosphoribose diphosphate (PRPP) to decaprenyl phosphate (DP) to form decaprenylphosphoryl-5-phosphoribose (DPPR). This chain is Decaprenyl-phosphate phosphoribosyltransferase, found in Mycobacterium tuberculosis (strain CDC 1551 / Oshkosh).